Consider the following 73-residue polypeptide: MAVFEKVQDIIVDELGKEKEEVTLETSFEELDADSLDLFQIINDIEDEFDVEVDTEADMKTVADLVKYVENNK.

The Carrier domain occupies 1 to 73 (MAVFEKVQDI…DLVKYVENNK (73 aa)). Residue Ser35 is modified to O-(pantetheine 4'-phosphoryl)serine.

This sequence belongs to the acyl carrier protein (ACP) family. In terms of processing, 4'-phosphopantetheine is transferred from CoA to a specific serine of apo-ACP by AcpS. This modification is essential for activity because fatty acids are bound in thioester linkage to the sulfhydryl of the prosthetic group.

The protein resides in the cytoplasm. The protein operates within lipid metabolism; fatty acid biosynthesis. In terms of biological role, carrier of the growing fatty acid chain in fatty acid biosynthesis. The sequence is that of Acyl carrier protein from Lactococcus lactis subsp. lactis (strain IL1403) (Streptococcus lactis).